A 555-amino-acid polypeptide reads, in one-letter code: Poly(A) polymerase PAPa (555 aa).

The segment at 1 to 20 (MNNQAYGVTPPISVANSTPK) is disordered. ATP-binding positions include 86-88 (FGS), 99-101 (DID), aspartate 153, lysine 214, tyrosine 223, and 232-233 (GV). Mg(2+)-binding residues include aspartate 99, aspartate 101, and aspartate 153. The tract at residues 532–555 (KRKRAVSKNEGKKKPKSVGTVSAA) is disordered.

Belongs to the poly(A) polymerase family. Mg(2+) serves as cofactor. Mn(2+) is required as a cofactor.

The protein localises to the nucleus. It carries out the reaction RNA(n) + ATP = RNA(n)-3'-adenine ribonucleotide + diphosphate. Functionally, polymerase that creates the 3'-poly(A) tail of mRNA's. May acquire specificity through interaction with a cleavage and polyadenylation factor. In Candida albicans (strain SC5314 / ATCC MYA-2876) (Yeast), this protein is Poly(A) polymerase PAPa (PAPA).